Here is a 95-residue protein sequence, read N- to C-terminus: Small ribosomal subunit protein uS15 (95 aa).

The protein belongs to the universal ribosomal protein uS15 family. Part of the 30S ribosomal subunit. Forms a bridge to the 50S subunit in the 70S ribosome, contacting the 23S rRNA.

Its function is as follows. One of the primary rRNA binding proteins, it binds directly to 16S rRNA where it helps nucleate assembly of the platform of the 30S subunit by binding and bridging several RNA helices of the 16S rRNA. Functionally, forms an intersubunit bridge (bridge B4) with the 23S rRNA of the 50S subunit in the ribosome. This is Small ribosomal subunit protein uS15 from Streptomyces coelicolor (strain ATCC BAA-471 / A3(2) / M145).